Consider the following 757-residue polypeptide: RNA exonuclease 3 (757 aa).

2 disordered regions span residues 56 to 259 (VKRE…AEHL) and 474 to 590 (ESLD…CDQA). Residues 120–132 (EGGRAEGAEKKEF) show a composition bias toward basic and acidic residues. Polar residues-rich tracts occupy residues 145–172 (TPHASATPQASVSPQTSAPPQHVSSSVS), 202–223 (QPSSSREPPVSSIDTRTSSSPK), and 230–240 (MTTSASPSQSR). 2 stretches are compositionally biased toward low complexity: residues 244-253 (RNTSASPSSS) and 474-502 (ESLDTSTSTSTSTSATTSAPSAKSTKTAS). The segment covering 503–516 (RPASTPTKSLTSSL) has biased composition (polar residues). Basic and acidic residues-rich tracts occupy residues 543 to 557 (REPDITLETMKRGIG) and 565 to 581 (SQERSSEPRERSARVRE). The Exonuclease domain maps to 597–751 (VVAVDCEMLY…EDALAALDVV (155 aa)).

It belongs to the REXO1/REXO3 family.

The protein resides in the cytoplasm. Its subcellular location is the nucleus. In terms of biological role, 3' to 5' exoribonuclease required for proper 3' end maturation of MRP RNA and of the U5L snRNA. The sequence is that of RNA exonuclease 3 (REX3) from Yarrowia lipolytica (strain CLIB 122 / E 150) (Yeast).